A 260-amino-acid chain; its full sequence is 1-(5-phosphoribosyl)-5-[(5-phosphoribosylamino)methylideneamino] imidazole-4-carboxamide isomerase (260 aa).

Asp8 (proton acceptor) is an active-site residue. Asp130 acts as the Proton donor in catalysis.

This sequence belongs to the HisA/HisF family.

It is found in the cytoplasm. The catalysed reaction is 1-(5-phospho-beta-D-ribosyl)-5-[(5-phospho-beta-D-ribosylamino)methylideneamino]imidazole-4-carboxamide = 5-[(5-phospho-1-deoxy-D-ribulos-1-ylimino)methylamino]-1-(5-phospho-beta-D-ribosyl)imidazole-4-carboxamide. Its pathway is amino-acid biosynthesis; L-histidine biosynthesis; L-histidine from 5-phospho-alpha-D-ribose 1-diphosphate: step 4/9. This is 1-(5-phosphoribosyl)-5-[(5-phosphoribosylamino)methylideneamino] imidazole-4-carboxamide isomerase from Chlorobaculum tepidum (strain ATCC 49652 / DSM 12025 / NBRC 103806 / TLS) (Chlorobium tepidum).